Here is a 92-residue protein sequence, read N- to C-terminus: Small ribosomal subunit protein uS19c (92 aa).

It belongs to the universal ribosomal protein uS19 family.

Its subcellular location is the plastid. The protein resides in the chloroplast. Functionally, protein S19 forms a complex with S13 that binds strongly to the 16S ribosomal RNA. The chain is Small ribosomal subunit protein uS19c from Gracilaria tenuistipitata var. liui (Red alga).